The following is a 160-amino-acid chain: MRRVMVLFGVVIAGVKGFMLTLVSMFRPKVTLRYPSEKGPLSTRFRGEHALRRYDDGEERCIACKLCEAICPAQAITIEAAERGDGSRRTVRYDIDMTKCIYCGFCQEACPVDAIVEGPNFEYATETREELMYNKEKLLCNGDVWEEALDFRIRKNRPYY.

4Fe-4S ferredoxin-type domains follow at residues 51-81 (LRRY…IEAA) and 91-120 (VRYD…EGPN). [4Fe-4S] cluster contacts are provided by C61, C64, C67, C71, C100, C103, C106, and C110.

The protein belongs to the complex I 23 kDa subunit family. NDH-1 is composed of 14 different subunits. Subunits NuoA, H, J, K, L, M, N constitute the membrane sector of the complex. Requires [4Fe-4S] cluster as cofactor.

It is found in the cell inner membrane. It carries out the reaction a quinone + NADH + 5 H(+)(in) = a quinol + NAD(+) + 4 H(+)(out). In terms of biological role, NDH-1 shuttles electrons from NADH, via FMN and iron-sulfur (Fe-S) centers, to quinones in the respiratory chain. The immediate electron acceptor for the enzyme in this species is believed to be ubiquinone. Couples the redox reaction to proton translocation (for every two electrons transferred, four hydrogen ions are translocated across the cytoplasmic membrane), and thus conserves the redox energy in a proton gradient. The protein is NADH-quinone oxidoreductase subunit I of Anaplasma marginale (strain St. Maries).